We begin with the raw amino-acid sequence, 236 residues long: Uridylate kinase (236 aa).

10–13 (KLSG) lines the ATP pocket. A UMP-binding site is contributed by G52. ATP contacts are provided by G53 and R57. Residues D72 and 133–140 (TGNPFFTT) each bind UMP. The ATP site is built by T160, Y166, and D169.

The protein belongs to the UMP kinase family. Homohexamer.

It localises to the cytoplasm. The catalysed reaction is UMP + ATP = UDP + ADP. Its pathway is pyrimidine metabolism; CTP biosynthesis via de novo pathway; UDP from UMP (UMPK route): step 1/1. Inhibited by UTP. Catalyzes the reversible phosphorylation of UMP to UDP. The protein is Uridylate kinase of Cupriavidus metallidurans (strain ATCC 43123 / DSM 2839 / NBRC 102507 / CH34) (Ralstonia metallidurans).